A 431-amino-acid chain; its full sequence is Mitochondrial inner membrane protein OXA1-like (431 aa).

The transit peptide at Met1–Ser22 directs the protein to the mitochondrion. Transmembrane regions (helical) follow at residues Val119–Ala139, Trp155–Leu175, Phe227–Ile247, Thr269–Val289, and Ile312–Trp332. The interval Asn362–Asn414 is disordered. Low complexity predominate over residues Pro392–Val402.

The protein belongs to the OXA1/ALB3/YidC (TC 2.A.9.2) family.

The protein localises to the mitochondrion inner membrane. In terms of biological role, probably required for the insertion of integral membrane proteins into the mitochondrial inner membrane. May participate in the activity and assembly of cytochrome oxidase. This chain is Mitochondrial inner membrane protein OXA1-like (OXA1L), found in Arabidopsis thaliana (Mouse-ear cress).